The primary structure comprises 128 residues: Small ribosomal subunit protein uS11 (128 aa).

Belongs to the universal ribosomal protein uS11 family. As to quaternary structure, part of the 30S ribosomal subunit. Interacts with proteins S7 and S18. Binds to IF-3.

In terms of biological role, located on the platform of the 30S subunit, it bridges several disparate RNA helices of the 16S rRNA. Forms part of the Shine-Dalgarno cleft in the 70S ribosome. The sequence is that of Small ribosomal subunit protein uS11 from Desulfosudis oleivorans (strain DSM 6200 / JCM 39069 / Hxd3) (Desulfococcus oleovorans).